The following is a 266-amino-acid chain: Apolipoprotein A-I (266 aa).

Positions 1-18 (MKAVVLTLAVLFLTGSQA) are cleaved as a signal peptide. Tandem repeats lie at residues 67 to 88 (LKLL…EQIG) and 89 to 110 (PVTQ…QEMN). The tract at residues 67-266 (LKLLDNWDSL…DEATKKLNSQ (200 aa)) is 10 X approximate tandem repeats. Met-109 carries the post-translational modification Methionine sulfoxide. The 3; half-length repeat unit spans residues 111–121 (KDLEEVKKKVQ). A run of 5 repeats spans residues 122–143 (PYLD…QKVA), 144–165 (PLGA…EKLS), 166–187 (PLGE…AQLA), 188–209 (PYGE…EGGG), and 210–231 (AALT…EKAK). A 9; half-length repeat occupies 232-242 (PALEDLRQGLL). Residues 243 to 266 (PVLENFRVSLLAAVDEATKKLNSQ) form repeat 10.

It belongs to the apolipoprotein A1/A4/E family. As to quaternary structure, homodimer. Interacts with APOA1BP and CLU. Component of a sperm activating protein complex (SPAP), consisting of APOA1, an immunoglobulin heavy chain, an immunoglobulin light chain and albumin. Interacts with NDRG1. Interacts with SCGB3A2. Interacts with NAXE and YJEFN3. In terms of processing, glycosylated. Palmitoylated. Post-translationally, phosphorylation sites are present in the extracellular medium.

Its subcellular location is the secreted. Participates in the reverse transport of cholesterol from tissues to the liver for excretion by promoting cholesterol efflux from tissues and by acting as a cofactor for the lecithin cholesterol acyltransferase (LCAT). As part of the SPAP complex, activates spermatozoa motility. This Leptonychotes weddellii (Weddell seal) protein is Apolipoprotein A-I (APOA1).